A 153-amino-acid polypeptide reads, in one-letter code: Acylphosphatase-like protein MJ0553 (153 aa).

The Acylphosphatase-like domain occupies 4 to 102; that stretch reads TYELIIYGRV…SRLSSDDILE (99 aa).

In Methanocaldococcus jannaschii (strain ATCC 43067 / DSM 2661 / JAL-1 / JCM 10045 / NBRC 100440) (Methanococcus jannaschii), this protein is Acylphosphatase-like protein MJ0553.